Reading from the N-terminus, the 369-residue chain is uncharacterized protein (369 aa).

Residues 1–19 form the signal peptide; that stretch reads MKKLIAVAVLSACGSLAHA.

This is an uncharacterized protein from Haemophilus influenzae (strain ATCC 51907 / DSM 11121 / KW20 / Rd).